A 735-amino-acid chain; its full sequence is MTDTLFERSDIDALLAGRHPDPFACLGPHGQTGQVVVRAVLPGAKSVHALSPEGAELGTLACVDRAGCFAGTIPRNGGAPHYLLAIDWPDARQVIDDAYAFGTLLDDAVLARFSAGDPAAVLDCLGATPARIDDTDGVRFAVWAPNAQRVSVVGDFNGWDGRRHPMRLRRPSGVWELFVPGIGAGECYKYELRAADGRVLPHKSDPCARATEAPPRTASVVADVAALDAFAWHDEGWMHARPRADRYRVPWSIYEVHAESWQRVPEEMNRSATWDELAERLIPYVQGMGFTHVEFMPIAEYPFGGSWGYQPVAQFAPSARFGPVDGFARFVDRAHAAGIGVLVDWVPAHFPDDPHGLAQFDGTALYEHADPREGLHPDWHTCVFNVGRTEVGAFLAASALAWARRYHVDGIRVDAVASMLYRDYSRAEGEWVPNVHGGRENLESVAFLRMLNDTLHGAAAPAGVVTVAEESTAWPGVTAPTGDGGLGFDFKWNMGWMHDTLAYVREDPVHRRYHHDRMTFGLVYAFSERFVLPLSHDEVVHGKGSLVAKMPGDAWQRLATLRAYFGFMWAHPGKKLLFMGSEFAQWAEFAHDATPHWDLLDAPAHRGVQRLVRDLNRTYAAEPALHALDCHAAGFSWLIGDDRDNSVFAFARRDEAGHLVVAICNFTPVPRASYRVGLPAPGQWRELMNTDAAPYGGTNAGNDGAVWAEAVPAHGEAWSALLRLPPLATLWLRPA.

Catalysis depends on aspartate 414, which acts as the Nucleophile. Glutamate 469 functions as the Proton donor in the catalytic mechanism.

Belongs to the glycosyl hydrolase 13 family. GlgB subfamily. In terms of assembly, monomer.

It carries out the reaction Transfers a segment of a (1-&gt;4)-alpha-D-glucan chain to a primary hydroxy group in a similar glucan chain.. Its pathway is glycan biosynthesis; glycogen biosynthesis. Catalyzes the formation of the alpha-1,6-glucosidic linkages in glycogen by scission of a 1,4-alpha-linked oligosaccharide from growing alpha-1,4-glucan chains and the subsequent attachment of the oligosaccharide to the alpha-1,6 position. In Burkholderia lata (strain ATCC 17760 / DSM 23089 / LMG 22485 / NCIMB 9086 / R18194 / 383), this protein is 1,4-alpha-glucan branching enzyme GlgB.